The following is a 327-amino-acid chain: 2-keto-3-deoxygluconate permease (327 aa).

10 consecutive transmembrane segments (helical) span residues 10–30 (IPGGMMLVPLFLGALCHTFSP), 42–62 (GMITGTVPILAVWFFCMGASI), 73–93 (KSGTLVVTKIAVAWVVAAIAS), 95–115 (IIPEHGVEVGFFAGLSTLALV), 139–159 (AGAFVLMSLESGPLMTMIILG), 163–183 (IASFEPHVFVGAVLPFLVGFA), 199–219 (VQTLIPFFAFALGNTIDLTVI), 224–244 (LLGILLGVAVIIVTGIPLIIA), 254–274 (TAGIAASSSAGAAVATPVLIA), and 289–309 (SLVATAVIVTSILVPILTSIW).

The protein belongs to the KdgT transporter family.

The protein localises to the cell inner membrane. It catalyses the reaction 2-dehydro-3-deoxy-D-gluconate(in) + H(+)(in) = 2-dehydro-3-deoxy-D-gluconate(out) + H(+)(out). In terms of biological role, catalyzes the proton-dependent uptake of 2-keto-3-deoxygluconate (KDG) into the cell. The chain is 2-keto-3-deoxygluconate permease from Escherichia coli O7:K1 (strain IAI39 / ExPEC).